Reading from the N-terminus, the 950-residue chain is Xylosyltransferase 1 (950 aa).

Topologically, residues 1 to 17 (MVAAPSARRLVRRSHSA) are cytoplasmic. A helical; Signal-anchor for type II membrane protein membrane pass occupies residues 18–38 (LLAALTVLLLQTLVGWNFSSL). The Lumenal portion of the chain corresponds to 39–950 (HSGAGERRGG…GAVKPDGRLR (912 aa)). A disordered region spans residues 42–246 (AGERRGGAAA…ELRYDQPPKC (205 aa)). Over residues 91-104 (PPARARARALAGCP) the composition is skewed to low complexity. Positions 134–150 (KVRTDSNNENSVPKDFE) are enriched in basic and acidic residues. A compositionally biased stretch (polar residues) spans 152 to 161 (VDNSNFAPRT). Over residues 166–193 (HQPELAKKPPSRQKELLKRRLEQEEKGK) the composition is skewed to basic and acidic residues. N-linked (GlcNAc...) asparagine glycosylation occurs at Asn215. Cystine bridges form between Cys246/Cys274, Cys290/Cys531, Cys550/Cys563, and Cys552/Cys561. Residues Val322, Asp350, and 379–381 (TIW) each bind UDP-alpha-D-xylose. N-linked (GlcNAc...) asparagine glycosylation is present at Asn410. Residue 483–484 (DW) coordinates UDP-alpha-D-xylose. UDP-alpha-D-xylose contacts are provided by residues Ser564 and 587-588 (RK). Intrachain disulfides connect Cys664–Cys918 and Cys911–Cys924. Residue Asn768 is glycosylated (N-linked (GlcNAc...) asparagine). A disordered region spans residues 931–950 (SFSPDPKSELGAVKPDGRLR).

This sequence belongs to the glycosyltransferase 14 family. XylT subfamily. In terms of assembly, monomer. A divalent metal cation is required as a cofactor. Contains 7 disulfide bonds. Post-translationally, N-glycosylated.

Its subcellular location is the golgi apparatus membrane. It carries out the reaction UDP-alpha-D-xylose + L-seryl-[protein] = 3-O-(beta-D-xylosyl)-L-seryl-[protein] + UDP + H(+). Its pathway is glycan metabolism; chondroitin sulfate biosynthesis. The protein operates within glycan metabolism; heparan sulfate biosynthesis. Its function is as follows. Catalyzes the first step in the biosynthesis of chondroitin sulfate and dermatan sulfate proteoglycans, such as DCN. Transfers D-xylose from UDP-D-xylose to specific serine residues of the core protein. Required for normal maturation of chondrocytes during bone development, normal onset of ossification and normal embryonic and postnatal skeleton development, especially of the long bones. This chain is Xylosyltransferase 1 (XYLT1), found in Canis lupus familiaris (Dog).